Reading from the N-terminus, the 295-residue chain is Acetylglutamate kinase (295 aa).

Substrate is bound by residues 70-71 (GG), Arg92, and Asn191.

Belongs to the acetylglutamate kinase family. ArgB subfamily.

The protein localises to the cytoplasm. It carries out the reaction N-acetyl-L-glutamate + ATP = N-acetyl-L-glutamyl 5-phosphate + ADP. It participates in amino-acid biosynthesis; L-arginine biosynthesis; N(2)-acetyl-L-ornithine from L-glutamate: step 2/4. Its function is as follows. Catalyzes the ATP-dependent phosphorylation of N-acetyl-L-glutamate. The polypeptide is Acetylglutamate kinase (Mycolicibacterium paratuberculosis (strain ATCC BAA-968 / K-10) (Mycobacterium paratuberculosis)).